The following is a 302-amino-acid chain: MKIIFMGTPDYAAHILEKLLNTKNIEVVALYTQPDKPVGRKKILTPPAAKNIALKYGIAISQPSRLRDKETVAEVTSIECDYIVVAAYGQILPLEILKHAPCINLHASILPHYRGASPIQQTLLHGDVKTGVTAMLMNEGLDTGDILKIKEIEVDADEMSESLFSRLTEVASDLTIDVLENFVQYTPKIQDDSLSSHCKKITKQDGEVEFDNATAIFNKYRAFTPWPGIYLTSGLKLKKIELFEKESQNESGRILDIQKDSIIVGCKKGSIKVITLQPESKNEMSALSYINGKRLNIADTLS.

Residue 108–111 (SILP) participates in (6S)-5,6,7,8-tetrahydrofolate binding.

This sequence belongs to the Fmt family.

The catalysed reaction is L-methionyl-tRNA(fMet) + (6R)-10-formyltetrahydrofolate = N-formyl-L-methionyl-tRNA(fMet) + (6S)-5,6,7,8-tetrahydrofolate + H(+). Attaches a formyl group to the free amino group of methionyl-tRNA(fMet). The formyl group appears to play a dual role in the initiator identity of N-formylmethionyl-tRNA by promoting its recognition by IF2 and preventing the misappropriation of this tRNA by the elongation apparatus. This chain is Methionyl-tRNA formyltransferase, found in Sulfurimonas denitrificans (strain ATCC 33889 / DSM 1251) (Thiomicrospira denitrificans (strain ATCC 33889 / DSM 1251)).